A 289-amino-acid chain; its full sequence is ATP synthase gamma chain (289 aa).

Belongs to the ATPase gamma chain family. As to quaternary structure, F-type ATPases have 2 components, CF(1) - the catalytic core - and CF(0) - the membrane proton channel. CF(1) has five subunits: alpha(3), beta(3), gamma(1), delta(1), epsilon(1). CF(0) has three main subunits: a, b and c.

The protein localises to the cell membrane. In terms of biological role, produces ATP from ADP in the presence of a proton gradient across the membrane. The gamma chain is believed to be important in regulating ATPase activity and the flow of protons through the CF(0) complex. The protein is ATP synthase gamma chain of Lactococcus lactis subsp. cremoris (strain SK11).